Here is a 511-residue protein sequence, read N- to C-terminus: Glycoprotein (511 aa).

A signal peptide spans 1–16 (MKCLLYLAFLFIGVNC). Topologically, residues 17 to 467 (KFTIVFPHNQ…FSSWKSSIAS (451 aa)) are virion surface. The segment at 18-35 (FTIVFPHNQKGNWKNVPS) is trimerization. 6 disulfide bridges follow: Cys40–Cys300, Cys75–Cys108, Cys84–Cys130, Cys169–Cys174, Cys193–Cys240, and Cys235–Cys269. Residues 53–172 (IGTAIQVKMP…QFINGKCSNY (120 aa)) are fusion peptide. An N-linked (GlcNAc...) asparagine; by host glycan is attached at Asn179. The segment at 259 to 309 (DLFAAARFPECPEGSSISAPSQTSVDVSLIQDVERILDYSLCQETWSKIRA) is trimerization. N-linked (GlcNAc...) asparagine; by host glycosylation occurs at Asn336. Positions 383–405 (EIGPNGVLRTSSGYKFPLYMIGH) are trimerization. The helical transmembrane segment at 468–488 (FFFIIGLIIGLFLVLRVGIHL) threads the bilayer. Cys489 carries the S-palmitoyl cysteine; by host lipid modification. Residues 489 to 511 (CIKLKHTKKRQIYTDIEMNRLGK) lie on the Intravirion side of the membrane. Residues 496–506 (KKRQIYTDIEM) carry the basolateral targeting ex vivo motif.

It belongs to the vesiculovirus glycoprotein family. In terms of assembly, homotrimer. Interacts with host LDL at target cell surface. Post-translationally, glycosylated by host. Palmitoylated by host.

Its subcellular location is the virion membrane. It localises to the host membrane. In terms of biological role, attaches the virus to host LDL receptors, inducing clathrin-dependent endocytosis of the virion. In the endosome, the acidic pH induces conformational changes in the glycoprotein trimer, which trigger fusion between virus and endosomal membrane. The protein is Glycoprotein (G) of Aedes (Bovine).